The primary structure comprises 86 residues: Cell division protein ZapA (86 aa).

It belongs to the ZapA family. Type 2 subfamily. As to quaternary structure, homodimer. Interacts with FtsZ.

It is found in the cytoplasm. Activator of cell division through the inhibition of FtsZ GTPase activity, therefore promoting FtsZ assembly into bundles of protofilaments necessary for the formation of the division Z ring. It is recruited early at mid-cell but it is not essential for cell division. This Oceanobacillus iheyensis (strain DSM 14371 / CIP 107618 / JCM 11309 / KCTC 3954 / HTE831) protein is Cell division protein ZapA.